Reading from the N-terminus, the 66-residue chain is U8-myrmicitoxin-Tb1a (66 aa).

A signal peptide spans 1–26; the sequence is MKLSFLSLAFAVIFVMAIMYAPQVEA. A propeptide spanning residues 27–50 is cleaved from the precursor; it reads KASADADADADAAASADALAKASA.

As to expression, expressed by the venom gland.

It is found in the secreted. In vivo, this neurotoxin paralyzes about 50% of blowflies (L.caesar) one hour after intrathoracic injection, when tested at high doses (54 nmol/g). The sequence is that of U8-myrmicitoxin-Tb1a from Tetramorium bicarinatum (Tramp ant).